The following is a 493-amino-acid chain: Probable cytosol aminopeptidase (493 aa).

Mn(2+) is bound by residues Lys260 and Asp265. The active site involves Lys272. The Mn(2+) site is built by Asp284, Asp343, and Glu345. Residue Arg347 is part of the active site.

This sequence belongs to the peptidase M17 family. It depends on Mn(2+) as a cofactor.

The protein resides in the cytoplasm. The enzyme catalyses Release of an N-terminal amino acid, Xaa-|-Yaa-, in which Xaa is preferably Leu, but may be other amino acids including Pro although not Arg or Lys, and Yaa may be Pro. Amino acid amides and methyl esters are also readily hydrolyzed, but rates on arylamides are exceedingly low.. The catalysed reaction is Release of an N-terminal amino acid, preferentially leucine, but not glutamic or aspartic acids.. In terms of biological role, presumably involved in the processing and regular turnover of intracellular proteins. Catalyzes the removal of unsubstituted N-terminal amino acids from various peptides. This chain is Probable cytosol aminopeptidase, found in Nostoc punctiforme (strain ATCC 29133 / PCC 73102).